Reading from the N-terminus, the 187-residue chain is Calcium and integrin-binding family member 3 (187 aa).

EF-hand domains lie at 66 to 101, 103 to 138, and 144 to 179; these read KDNP…MSEM, PRDL…LTRG, and EVSL…APDF. Ca(2+)-binding residues include D116, N118, D120, Y122, D127, D157, D159, D161, R163, and D168.

As to quaternary structure, monomer and homodimer. Interacts with ITGA2B (via C-terminus cytoplasmic tail region); the interaction is stabilized/increased in a calcium and magnesium-dependent manner. Interacts with TMC1.

In terms of biological role, acts a an auxiliary subunit of the sensory mechanoelectrical transduction (MET) channel in hair cells. Plays a role in regulating hair cell MET channel localization and function. The polypeptide is Calcium and integrin-binding family member 3 (CIB3) (Homo sapiens (Human)).